The chain runs to 121 residues: Small ribosomal subunit protein uS13 (121 aa).

A disordered region spans residues 94–121 (GLPVRGQNTKNNARTRKGKAVAIAGKKK). Positions 106 to 121 (ARTRKGKAVAIAGKKK) are enriched in basic residues.

Belongs to the universal ribosomal protein uS13 family. Part of the 30S ribosomal subunit. Forms a loose heterodimer with protein S19. Forms two bridges to the 50S subunit in the 70S ribosome.

Its function is as follows. Located at the top of the head of the 30S subunit, it contacts several helices of the 16S rRNA. In the 70S ribosome it contacts the 23S rRNA (bridge B1a) and protein L5 of the 50S subunit (bridge B1b), connecting the 2 subunits; these bridges are implicated in subunit movement. Contacts the tRNAs in the A and P-sites. The sequence is that of Small ribosomal subunit protein uS13 from Streptococcus sanguinis (strain SK36).